A 322-amino-acid chain; its full sequence is Methionyl-tRNA formyltransferase (322 aa).

Position 113 to 116 (113 to 116 (SLLP)) interacts with (6S)-5,6,7,8-tetrahydrofolate.

This sequence belongs to the Fmt family.

It carries out the reaction L-methionyl-tRNA(fMet) + (6R)-10-formyltetrahydrofolate = N-formyl-L-methionyl-tRNA(fMet) + (6S)-5,6,7,8-tetrahydrofolate + H(+). In terms of biological role, attaches a formyl group to the free amino group of methionyl-tRNA(fMet). The formyl group appears to play a dual role in the initiator identity of N-formylmethionyl-tRNA by promoting its recognition by IF2 and preventing the misappropriation of this tRNA by the elongation apparatus. The chain is Methionyl-tRNA formyltransferase from Blochmanniella pennsylvanica (strain BPEN).